An 822-amino-acid polypeptide reads, in one-letter code: LPS-assembly protein LptD (822 aa).

The N-terminal stretch at 1-37 (MRRASRSPFILSPVAHAVSRLVLCATLGWTYAGSGHA) is a signal peptide. The interval 38-97 (QVPAPAGGSEVPLGARPPASAPVAAQQETPLKLKSSPALAEEVPNGPGDEGPTFVFGDSV) is disordered.

It belongs to the LptD family. As to quaternary structure, component of the lipopolysaccharide transport and assembly complex. Interacts with LptE and LptA.

The protein localises to the cell outer membrane. Functionally, together with LptE, is involved in the assembly of lipopolysaccharide (LPS) at the surface of the outer membrane. The polypeptide is LPS-assembly protein LptD (Polaromonas sp. (strain JS666 / ATCC BAA-500)).